The primary structure comprises 148 residues: Snaclec B4 (148 aa).

Residues 1-24 (MGRIIFVSFGLLVVFLSLSGTGAA) form the signal peptide. 3 disulfide bridges follow: Cys27/Cys38, Cys55/Cys144, and Cys121/Cys136. The region spanning 34–145 (YDQHCYKVFD…CRLLGHFVCK (112 aa)) is the C-type lectin domain.

Belongs to the snaclec family. In terms of assembly, heterodimer; disulfide-linked. Expressed by the venom gland.

It is found in the secreted. Interferes with one step of hemostasis (modulation of platelet aggregation, or coagulation cascade, for example). The protein is Snaclec B4 of Macrovipera lebetinus (Levantine viper).